The following is a 710-amino-acid chain: Polyribonucleotide nucleotidyltransferase (710 aa).

Residues Asp-489 and Asp-495 each contribute to the Mg(2+) site. Positions 556 to 615 (PKIDTIKIDVDKIKVVIGKGGETIDKIIAETGVKIDIDDEGNVSIYSSDQAAIDRTKEII) constitute a KH domain. An S1 motif domain is found at 625–693 (GEVYHAKVIR…EKGRVDASMK (69 aa)). The segment at 691–710 (SMKALIPRPPKPEKKEEKHD) is disordered. Basic and acidic residues predominate over residues 700-710 (PKPEKKEEKHD).

This sequence belongs to the polyribonucleotide nucleotidyltransferase family. The cofactor is Mg(2+).

It localises to the cytoplasm. It catalyses the reaction RNA(n+1) + phosphate = RNA(n) + a ribonucleoside 5'-diphosphate. Involved in mRNA degradation. Catalyzes the phosphorolysis of single-stranded polyribonucleotides processively in the 3'- to 5'-direction. This is Polyribonucleotide nucleotidyltransferase from Streptococcus pyogenes serotype M4 (strain MGAS10750).